The primary structure comprises 84 residues: Subtilisin-chymotrypsin inhibitor WSCI (84 aa).

Positions 1–12 (MSSVVKKPLGGN) are cleaved as a signal peptide. Residues 1–28 (MSSVVKKPLGGNTDTGDHHNQKTEWPEL) form a disordered region. A compositionally biased stretch (basic and acidic residues) spans 15 to 25 (TGDHHNQKTEW).

Monomer.

Its subcellular location is the secreted. In terms of biological role, inhibits B.lichenoformis subtilisin, B.subtilis subtilisin, bovine pancreatic alpha-chymotrypsin and porcine alpha-chymotrypsin with Ki of 3.92 nM, 5.70 nM, 7.24 nM and 9.35 nM respectively. B.lichenoformis subtilisin is inhibited with a molar ratio of 1:0.87. Also inhibits chymotrypsin-like activities from the digestive tracts of the insect larvae T.molitor, P.interpunctella and H.armigera. Does not inhibit bovine pancreatic trypsin, porcine pancreatic elastase, or human leukocyte elastase. The polypeptide is Subtilisin-chymotrypsin inhibitor WSCI (Triticum aestivum (Wheat)).